The chain runs to 391 residues: 2,4,6-trihydroxybenzophenone synthase (391 aa).

The active site involves C165.

The protein belongs to the thiolase-like superfamily. Chalcone/stilbene synthases family. As to quaternary structure, homodimer. As to expression, expressed in young fruit pericarp.

It carries out the reaction benzoyl-CoA + 3 malonyl-CoA + 2 H(+) = 2,4,6-trihydroxybenzophenone + 3 CO2 + 4 CoA. Type III polyketide synthase involved in the biosynthesis of benzophenones and xanthones. Produces mainly 2,4,6-trihydroxybenzophenone together with minor amounts of tetraketide lactone, triketide lactone and diketide lactone. The preferred substrate is benzoyl-CoA, but can also use acetyl-CoA, phenylacetyl-CoA, hexanoyl-CoA, cinnamoyl-CoA, p-coumaroyl-CoA and salicoyl-CoA. The sequence is that of 2,4,6-trihydroxybenzophenone synthase (BPS) from Garcinia mangostana (Mangosteen).